The sequence spans 387 residues: Formate-dependent phosphoribosylglycinamide formyltransferase (387 aa).

Residues 12–13 (EL) and Glu72 each bind N(1)-(5-phospho-beta-D-ribosyl)glycinamide. ATP-binding positions include Arg104, Lys145, 150-155 (SSGKGQ), 185-188 (EEFI), and Glu193. The ATP-grasp domain occupies 109 to 300 (DLAAKDLKLL…EFELHLRAIL (192 aa)). Residues Glu258 and Glu270 each contribute to the Mg(2+) site. Residues Asp277, Lys348, and 355–356 (RR) contribute to the N(1)-(5-phospho-beta-D-ribosyl)glycinamide site.

This sequence belongs to the PurK/PurT family. As to quaternary structure, homodimer.

The enzyme catalyses N(1)-(5-phospho-beta-D-ribosyl)glycinamide + formate + ATP = N(2)-formyl-N(1)-(5-phospho-beta-D-ribosyl)glycinamide + ADP + phosphate + H(+). It functions in the pathway purine metabolism; IMP biosynthesis via de novo pathway; N(2)-formyl-N(1)-(5-phospho-D-ribosyl)glycinamide from N(1)-(5-phospho-D-ribosyl)glycinamide (formate route): step 1/1. Its function is as follows. Involved in the de novo purine biosynthesis. Catalyzes the transfer of formate to 5-phospho-ribosyl-glycinamide (GAR), producing 5-phospho-ribosyl-N-formylglycinamide (FGAR). Formate is provided by PurU via hydrolysis of 10-formyl-tetrahydrofolate. The protein is Formate-dependent phosphoribosylglycinamide formyltransferase of Leptospira interrogans serogroup Icterohaemorrhagiae serovar copenhageni (strain Fiocruz L1-130).